Here is a 171-residue protein sequence, read N- to C-terminus: Adenine phosphoribosyltransferase (171 aa).

This sequence belongs to the purine/pyrimidine phosphoribosyltransferase family. In terms of assembly, homodimer.

The protein resides in the cytoplasm. It catalyses the reaction AMP + diphosphate = 5-phospho-alpha-D-ribose 1-diphosphate + adenine. Its pathway is purine metabolism; AMP biosynthesis via salvage pathway; AMP from adenine: step 1/1. Functionally, catalyzes a salvage reaction resulting in the formation of AMP, that is energically less costly than de novo synthesis. The polypeptide is Adenine phosphoribosyltransferase (Pelotomaculum thermopropionicum (strain DSM 13744 / JCM 10971 / SI)).